Reading from the N-terminus, the 152-residue chain is Small ribosomal subunit protein uS8m (152 aa).

The protein belongs to the universal ribosomal protein uS8 family.

The protein localises to the mitochondrion. This Marchantia polymorpha (Common liverwort) protein is Small ribosomal subunit protein uS8m (RPS8).